The following is a 914-amino-acid chain: Isoleucine--tRNA ligase (914 aa).

The 'HIGH' region signature appears at 57 to 67 (PYANGQIHMGH). Glu554 provides a ligand contact to L-isoleucyl-5'-AMP. Positions 595–599 (KMSKS) match the 'KMSKS' region motif. Lys598 contributes to the ATP binding site. Residues Cys883, Cys886, Cys904, and Cys907 each coordinate Zn(2+).

It belongs to the class-I aminoacyl-tRNA synthetase family. IleS type 1 subfamily. In terms of assembly, monomer. Zn(2+) serves as cofactor.

The protein resides in the cytoplasm. The catalysed reaction is tRNA(Ile) + L-isoleucine + ATP = L-isoleucyl-tRNA(Ile) + AMP + diphosphate. Functionally, catalyzes the attachment of isoleucine to tRNA(Ile). As IleRS can inadvertently accommodate and process structurally similar amino acids such as valine, to avoid such errors it has two additional distinct tRNA(Ile)-dependent editing activities. One activity is designated as 'pretransfer' editing and involves the hydrolysis of activated Val-AMP. The other activity is designated 'posttransfer' editing and involves deacylation of mischarged Val-tRNA(Ile). The chain is Isoleucine--tRNA ligase from Macrococcus caseolyticus (strain JCSC5402) (Macrococcoides caseolyticum).